The sequence spans 911 residues: Valine--tRNA ligase (911 aa).

Residues 57–67 carry the 'HIGH' region motif; it reads PTVSGSLHVGH. Residues 599 to 603 carry the 'KMSKS' region motif; it reads KMSKS. Lys-602 provides a ligand contact to ATP. The interval 882 to 911 is disordered; that stretch reads EESAAEDAPETEVAVEASELGEPPVKKPKH.

The protein belongs to the class-I aminoacyl-tRNA synthetase family. ValS type 2 subfamily. As to quaternary structure, monomer.

It is found in the cytoplasm. The enzyme catalyses tRNA(Val) + L-valine + ATP = L-valyl-tRNA(Val) + AMP + diphosphate. Functionally, catalyzes the attachment of valine to tRNA(Val). As ValRS can inadvertently accommodate and process structurally similar amino acids such as threonine, to avoid such errors, it has a 'posttransfer' editing activity that hydrolyzes mischarged Thr-tRNA(Val) in a tRNA-dependent manner. In Bifidobacterium longum subsp. infantis (strain ATCC 15697 / DSM 20088 / JCM 1222 / NCTC 11817 / S12), this protein is Valine--tRNA ligase.